The primary structure comprises 456 residues: Endoglucanase A (456 aa).

An N-terminal signal peptide occupies residues 1 to 30; sequence MSRIRRFLATALAAATAGVGAIVTAIASAG. The interval 31-322 is catalytic; sequence PAHAYDSPFY…RAYELAMNAA (292 aa). Asp113 is a catalytic residue. 2 disulfide bridges follow: Cys114/Cys159 and Cys267/Cys302. Catalysis depends on Asp151, which acts as the Proton donor. Residues 255-280 are disordered; it reads SRNGNGPLGSEWCDPPGRATGTWSTT. The Nucleophile role is filled by Asp300. The disordered stretch occupies residues 321-358; it reads AAPPTYSPSPTPSTPSPSPSQSDPGSPSPSPSQPPAGR. A linker ('hinge') (Pro-Ser box) region spans residues 323-355; that stretch reads PPTYSPSPTPSTPSPSPSQSDPGSPSPSPSQPP. Residues 325–338 show a composition bias toward pro residues; it reads TYSPSPTPSTPSPS. The region spanning 353–456 is the CBM2 domain; the sequence is QPPAGRACEA…LSSSITCSAS (104 aa). A disulfide bridge links Cys360 with Cys453.

Belongs to the glycosyl hydrolase 6 (cellulase B) family.

It carries out the reaction Endohydrolysis of (1-&gt;4)-beta-D-glucosidic linkages in cellulose, lichenin and cereal beta-D-glucans.. This Thermobispora bispora (Microbispora bispora) protein is Endoglucanase A (celA).